The primary structure comprises 113 residues: DNA-binding protein PTO0204 (113 aa).

It belongs to the PDCD5 family.

The chain is DNA-binding protein PTO0204 from Picrophilus torridus (strain ATCC 700027 / DSM 9790 / JCM 10055 / NBRC 100828 / KAW 2/3).